Consider the following 515-residue polypeptide: ATP synthase subunit alpha (515 aa).

Residue G169–T176 participates in ATP binding.

This sequence belongs to the ATPase alpha/beta chains family. F-type ATPases have 2 components, CF(1) - the catalytic core - and CF(0) - the membrane proton channel. CF(1) has five subunits: alpha(3), beta(3), gamma(1), delta(1), epsilon(1). CF(0) has three main subunits: a(1), b(2) and c(9-12). The alpha and beta chains form an alternating ring which encloses part of the gamma chain. CF(1) is attached to CF(0) by a central stalk formed by the gamma and epsilon chains, while a peripheral stalk is formed by the delta and b chains.

It is found in the cell inner membrane. The catalysed reaction is ATP + H2O + 4 H(+)(in) = ADP + phosphate + 5 H(+)(out). In terms of biological role, produces ATP from ADP in the presence of a proton gradient across the membrane. The alpha chain is a regulatory subunit. This chain is ATP synthase subunit alpha, found in Neisseria gonorrhoeae (strain ATCC 700825 / FA 1090).